An 860-amino-acid polypeptide reads, in one-letter code: Transcription factor E2F8 (860 aa).

Disordered stretches follow at residues 1 to 27 (MENQKENLFSEPHKRGLMKSPLHPSSK) and 38 to 57 (DLGPLTTPTKPKEVSQGEPW). A phosphoserine mark is found at S71 and S102. 2 DNA-binding regions span residues 113-182 (RKEK…TWHG) and 261-347 (RKDK…KWTG). Disordered regions lie at residues 407–433 (RRKISSAPSSPVKSNKAESSQNSPPVP), 532–616 (LTPP…PKED), and 745–803 (QMSA…QPVP). S412 and S416 each carry phosphoserine. Composition is skewed to polar residues over residues 412–429 (SAPSSPVKSNKAESSQNS) and 542–554 (VCPTQPSNATGSK). Over residues 555 to 565 (DPTDAPAEKTA) the composition is skewed to basic and acidic residues.

The protein belongs to the E2F/DP family. As to quaternary structure, interacts with HIF1A. Homodimer and heterodimer: mainly forms homodimers and, to a lesser extent, heterodimers with E2F8. Dimerization is important for DNA-binding. As to expression, highly expressed in liver, skin, thymus and testis. Expressed in trophoblast giant cells throughout placenta development (at protein level).

The protein resides in the nucleus. Functionally, atypical E2F transcription factor that participates in various processes such as angiogenesis and polyploidization of specialized cells. Mainly acts as a transcription repressor that binds DNA independently of DP proteins and specifically recognizes the E2 recognition site 5'-TTTC[CG]CGC-3'. Directly represses transcription of classical E2F transcription factors such as E2F1: component of a feedback loop in S phase by repressing the expression of E2F1, thereby preventing p53/TP53-dependent apoptosis. Plays a key role in polyploidization of cells in placenta and liver by regulating the endocycle, probably by repressing genes promoting cytokinesis and antagonizing action of classical E2F proteins (E2F1, E2F2 and/or E2F3). Required for placental development by promoting polyploidization of trophoblast giant cells. Acts as a promoter of sprouting angiogenesis, possibly by acting as a transcription activator: associates with HIF1A, recognizes and binds the VEGFA promoter, which is different from canonical E2 recognition site, and activates expression of the VEGFA gene. This is Transcription factor E2F8 (E2f8) from Mus musculus (Mouse).